The following is a 345-amino-acid chain: 3-isopropylmalate dehydrogenase (345 aa).

74–87 (GPKWDGLPRKIRPE) is a binding site for NAD(+). 4 residues coordinate substrate: arginine 94, arginine 104, arginine 132, and aspartate 217. Residues aspartate 217, aspartate 241, and aspartate 245 each coordinate Mg(2+). Residue 274 to 286 (GSAPDIAGKGIAN) participates in NAD(+) binding.

Belongs to the isocitrate and isopropylmalate dehydrogenases family. LeuB type 1 subfamily. In terms of assembly, homodimer. Mg(2+) serves as cofactor. Mn(2+) is required as a cofactor.

Its subcellular location is the cytoplasm. It catalyses the reaction (2R,3S)-3-isopropylmalate + NAD(+) = 4-methyl-2-oxopentanoate + CO2 + NADH. The protein operates within amino-acid biosynthesis; L-leucine biosynthesis; L-leucine from 3-methyl-2-oxobutanoate: step 3/4. Functionally, catalyzes the oxidation of 3-carboxy-2-hydroxy-4-methylpentanoate (3-isopropylmalate) to 3-carboxy-4-methyl-2-oxopentanoate. The product decarboxylates to 4-methyl-2 oxopentanoate. The protein is 3-isopropylmalate dehydrogenase (leuB) of Thermus thermophilus (strain ATCC 27634 / DSM 579 / HB8).